Consider the following 7968-residue polypeptide: Obscurin (7968 aa).

Ig-like domains lie at 10-100 (PRFL…LQVD), 110-202 (PHFL…LVVD), 236-322 (PASP…QTYS), 331-414 (PAVP…RTVA), and 420-508 (GNLL…VSAP). The cysteines at positions 31 and 82 are disulfide-linked. The segment at 228-249 (EAMRAEGAPASPPSTGTRTCTV) is disordered. Residues 240–249 (PSTGTRTCTV) are compositionally biased toward polar residues. 2 cysteine pairs are disulfide-bonded: Cys-259-Cys-311 and Cys-354-Cys-404. Ser-395 bears the Phosphoserine mark. Residues 515-612 (PPVDPVVKAR…FPGTVHLAPK (98 aa)) form the Fibronectin type-III 1 domain. Ig-like domains lie at 619–698 (LKAV…MEVR), 701–790 (PGLT…YQLS), 798–884 (LHKD…LRVS), 886–977 (PKVV…DVKE), 978–1066 (PKVV…FRLH), 1070–1161 (PKMM…HITE), 1162–1252 (PKGV…LHIT), 1254–1345 (PKAV…DVSE), 1346–1432 (PKAV…LSFS), 1438–1524 (PKVV…LSFH), 1530–1621 (PKAV…HVAE), and 1622–1719 (PKVV…PQIS). Cystine bridges form between Cys-819–Cys-870, Cys-912–Cys-962, Cys-1004–Cys-1054, Cys-1096–Cys-1146, Cys-1188–Cys-1238, Cys-1280–Cys-1330, Cys-1372–Cys-1422, Cys-1464–Cys-1514, Cys-1556–Cys-1606, Cys-1648–Cys-1698, Cys-1723–Cys-1791, and Cys-1830–Cys-1880. One can recognise a Fibronectin type-III 2 domain in the interval 1731 to 1808 (KEHEDIILTA…DFPVQVEEVA (78 aa)). 29 consecutive Ig-like domains span residues 1809-1894 (AKFC…LTVS), 1896-1982 (PRVV…AALR), 1987-2071 (PVLF…AKLT), 2077-2162 (VRLV…LVVT), 2165-2249 (PVSF…ASVK), 2289-2380 (PVTL…QSIT), 2468-2559 (PVVL…REVT), 2564-2643 (LQDA…LEVR), 2646-2730 (PVVF…ARVR), 2736-2823 (VGIT…LIVR), 2826-2908 (PAAI…STAS), 2920-2999 (EELT…AQLL), 3003-3092 (RRVH…LRVT), 3095-3183 (PSVF…VHAR), 3184-3268 (PVRF…ATLT), 3273-3356 (PAQF…ASLT), 3359-3444 (PMPA…ATLT), 3449-3532 (PAKF…ATLT), 3537-3620 (PARF…AMLT), 3625-3708 (PIKF…AMLT), 3713-3796 (PSKF…ATLT), 3801-3884 (PARF…ATLT), 3890-3973 (PVFR…ATLT), 3978-4062 (PVRF…ASLS), 4068-4160 (PKFK…PEVT), 4171-4239 (TADE…NHAS), 4248-4337 (PEVT…LKVT), 4340-4427 (NTVV…FLTV), and 4430-4518 (WRLE…ARLT). Cystine bridges form between Cys-2187/Cys-2237, Cys-2311/Cys-2361, and Cys-2490/Cys-2540. A disulfide bridge connects residues Cys-2668 and Cys-2718. 2 disulfide bridges follow: Cys-2848/Cys-2898 and Cys-2937/Cys-2987. Position 2889 is a phosphoserine (Ser-2889). 12 cysteine pairs are disulfide-bonded: Cys-3117/Cys-3167, Cys-3206/Cys-3256, Cys-3295/Cys-3344, Cys-3383/Cys-3432, Cys-3471/Cys-3520, Cys-3559/Cys-3608, Cys-3647/Cys-3696, Cys-3735/Cys-3784, Cys-3823/Cys-3872, Cys-3911/Cys-3961, Cys-4000/Cys-4050, and Cys-4089/Cys-4141. A Phosphoserine modification is found at Ser-4015. The cysteines at positions 4453 and 4508 are disulfide-linked. The 95-residue stretch at 4525-4619 (PPEDAEVVAR…LPQTVRLAEP (95 aa)) folds into the Fibronectin type-III 3 domain. In terms of domain architecture, Ig-like 47 spans 4624–4714 (PPQPSAPESR…AAATFQVALS (91 aa)). Positions 4749 to 4785 (MSREPTLDSISELPEEDGRSQRLPQEAEEVAPDLSEG) are disordered. Ser-4750 bears the Phosphoserine mark. Thr-4754 carries the phosphothreonine modification. At Ser-4757 the chain carries Phosphoserine. At Thr-4788 the chain carries Phosphothreonine. The residue at position 4805 (Ser-4805) is a Phosphoserine. A disordered region spans residues 4820 to 4860 (LKKAGRPGTSPLASKVGAPAAPSVKPQQQQEPLAAVRPPLG). The IQ domain occupies 4872–4901 (MDKAAVKIQAAFKGYKVRKEMKQQEGPMFS). Ig-like domains are found at residues 4898-4989 (PMFS…VVVS) and 5126-5215 (PVFL…AELR). Cystine bridges form between Cys-4919-Cys-4971 and Cys-5147-Cys-5199. A compositionally biased stretch (polar residues) spans 5238-5256 (AQGYLSSREQEGTESTTDE). Residues 5238–5257 (AQGYLSSREQEGTESTTDEG) form a disordered region. 2 Ig-like domains span residues 5260–5349 (PQVV…ARLL) and 5371–5467 (PRML…LHVS). The tract at residues 5554–5596 (AKLQVPGGDSDEDSKTPSASPRHGRSRPSSSIQESSSESEDGD) is disordered. Phosphoserine is present on Ser-5563. Thr-5569 carries the post-translational modification Phosphothreonine. The segment covering 5570 to 5589 (PSASPRHGRSRPSSSIQESS) has biased composition (low complexity). Phosphoserine is present on residues Ser-5571 and Ser-5573. In terms of domain architecture, SH3 spans 5600 to 5667 (EIFDIYVVTA…SPAYLDRRLK (68 aa)). The DH domain maps to 5693 to 5877 (RLSSVIQELL…SALPQRAENK (185 aa)). The 110-residue stretch at 5895 to 6004 (EPIRQGHFIV…WVKEICGIQQ (110 aa)) folds into the PH domain. Arg-5975 contacts a 1,2-diacyl-sn-glycero-3-phospho-(1D-myo-inositol-4,5-bisphosphate). Position 5980 (Arg-5980) interacts with a 1,2-diacyl-sn-glycero-3-phospho-(1D-myo-inositol-3,4-bisphosphate). 2 Ig-like domains span residues 6014-6097 (PDFE…GNCS) and 6108-6200 (PRFV…LRIQ). 2 cysteine pairs are disulfide-bonded: Cys-6035–Cys-6087 and Cys-6129–Cys-6182. A disordered region spans residues 6237–6296 (RLLGPKAPGPSTGDLTGPGPCPRGAPALQETGSQPPVTGTSEAPAVPPRVPQPLLHEGPE). Residues 6266-6277 (ETGSQPPVTGTS) are compositionally biased toward polar residues. The 89-residue stretch at 6357–6445 (PSMQVTIEDV…GQVLCKAELL (89 aa)) folds into the Ig-like 54 domain. Residues 6468 to 6721 (YEVKEEIGRG…AAQCLSHPWF (254 aa)) enclose the Protein kinase 1 domain. Residues 6474-6482 (IGRGVFGFV) and Lys-6497 each bind ATP. The active-site Proton acceptor is Asp-6587. Disordered regions lie at residues 6777-6863 (GVAR…AQGC), 6952-7176 (SGTH…TMRK), and 7217-7272 (VSQS…TPWE). Ser-6831 carries the post-translational modification Phosphoserine. Residues 7052 to 7061 (AVAPCPPGSF) show a composition bias toward pro residues. Positions 7115 to 7139 (SSPGSASQASSSQVSSLRVGSSQVG) are enriched in low complexity. Over residues 7160 to 7172 (DSTPTLQRPQEQA) the composition is skewed to polar residues. Positions 7227-7242 (EARAESQSEEQQEARA) are enriched in basic and acidic residues. The residue at position 7244 (Ser-7244) is a Phosphoserine. The Ig-like 55 domain occupies 7463–7552 (PTFLRELSDE…GTVTTTGVLR (90 aa)). A disulfide bridge connects residues Cys-7484 and Cys-7536. In terms of domain architecture, Fibronectin type-III 4 spans 7557–7649 (PSSSPCPDIG…PSEQVLLGGP (93 aa)). The 253-residue stretch at 7672–7924 (FAFQTQIQRG…ASSCLQCPWL (253 aa)) folds into the Protein kinase 2 domain. ATP-binding positions include 7678-7686 (IQRGRFSVV) and Lys-7701. The Proton acceptor role is filled by Asp-7791.

Belongs to the protein kinase superfamily. CAMK Ser/Thr protein kinase family. Interacts (via protein kinase domain 2) with CDH2 and (via protein kinase domain 1) with ATP1B1. Isoform 3 interacts with TTN/titin and calmodulin. Isoform 3 interacts with ANK1 isoform Mu17/ank1.5. Mg(2+) is required as a cofactor. In terms of processing, autophosphorylated by protein kinase domains 1 and 2.

The protein localises to the cytoplasm. Its subcellular location is the myofibril. It is found in the sarcomere. It localises to the m line. The protein resides in the z line. The protein localises to the cell membrane. Its subcellular location is the sarcolemma. It is found in the nucleus. The enzyme catalyses L-seryl-[protein] + ATP = O-phospho-L-seryl-[protein] + ADP + H(+). It carries out the reaction L-threonyl-[protein] + ATP = O-phospho-L-threonyl-[protein] + ADP + H(+). Its function is as follows. Structural component of striated muscles which plays a role in myofibrillogenesis. Probably involved in the assembly of myosin into sarcomeric A bands in striated muscle. Has serine/threonine protein kinase activity and phosphorylates N-cadherin CDH2 and sodium/potassium-transporting ATPase subunit ATP1B1. Binds (via the PH domain) strongly to phosphatidylinositol 3,4-bisphosphate (PtdIns(3,4)P2) and phosphatidylinositol 4,5-bisphosphate (PtdIns(4,5)P2), and to a lesser extent to phosphatidylinositol 3-phosphate (PtdIns(3)P), phosphatidylinositol 4-phosphate (PtdIns(4)P), phosphatidylinositol 5-phosphate (PtdIns(5)P) and phosphatidylinositol 3,4,5-trisphosphate (PtdIns(3,4,5)P3). This chain is Obscurin (OBSCN), found in Homo sapiens (Human).